Here is a 604-residue protein sequence, read N- to C-terminus: Baculoviral IAP repeat-containing protein 3 (604 aa).

A BIR 1 repeat occupies 29–96; the sequence is ELYRMSTYST…RNLYPSCSFI (68 aa). Arg130 carries the post-translational modification Omega-N-methylarginine. Ser140 carries the phosphoserine modification. 2 BIR repeats span residues 169–235 and 255–322; these read EEDR…CPFV and LAAR…CEYL. Residues Cys292, Cys295, His312, and Cys319 each contribute to the Zn(2+) site. The 91-residue stretch at 439–529 folds into the CARD domain; sequence RESDDVSLIR…MLYKRFFVQQ (91 aa). Residues 557 to 592 form an RING-type zinc finger; that stretch reads CKVCMDKEVSIVFIPCGHLVVCRDCAPSLRKCPICR.

It belongs to the IAP family. Interacts with PRSS25; the interaction inhibits apoptotic suppressor activity. The BIR motifs region interacts with TNF receptor associated factors 1 and 2 (TRAF1 and TRAF2) to form a heteromeric complex, which is then recruited to the tumor necrosis factor receptor 2 (TNFR2). Interaction with TRAF2 is required for ubiquitination of IKBKE, degradation of NFKBIA and activation of NF-kappa-B. Interacts with RIP1, RIP2, RIP3, RIP4 and USP19. In terms of processing, auto-ubiquitinated and degraded by the proteasome in apoptotic cells.

It localises to the cytoplasm. The protein resides in the nucleus. It carries out the reaction S-ubiquitinyl-[E2 ubiquitin-conjugating enzyme]-L-cysteine + [acceptor protein]-L-lysine = [E2 ubiquitin-conjugating enzyme]-L-cysteine + N(6)-ubiquitinyl-[acceptor protein]-L-lysine.. USP19 regulates the stability of BIRC3/c-IAP2 by preventing its ubiquitination. Its function is as follows. Multi-functional protein which regulates not only caspases and apoptosis, but also modulates inflammatory signaling and immunity, mitogenic kinase signaling and cell proliferation, as well as cell invasion and metastasis. Acts as an E3 ubiquitin-protein ligase regulating NF-kappa-B signaling and regulates both canonical and non-canonical NF-kappa-B signaling by acting in opposite directions: acts as a positive regulator of the canonical pathway and suppresses constitutive activation of non-canonical NF-kappa-B signaling. The target proteins for its E3 ubiquitin-protein ligase activity include: RIPK1, RIPK2, RIPK3, RIPK4, CASP3, CASP7, CASP8, IKBKE, TRAF1, and BCL10. Acts as an important regulator of innate immune signaling via regulation of Toll-like receptors (TLRs), Nodlike receptors (NLRs) and RIG-I like receptors (RLRs), collectively referred to as pattern recognition receptors (PRRs). Protects cells from spontaneous formation of the ripoptosome, a large multi-protein complex that has the capability to kill cancer cells in a caspase-dependent and caspase-independent manner. Suppresses ripoptosome formation by ubiquitinating RIPK1 and CASP8. The polypeptide is Baculoviral IAP repeat-containing protein 3 (BIRC3) (Canis lupus familiaris (Dog)).